A 1342-amino-acid polypeptide reads, in one-letter code: DNA-directed RNA polymerase subunit beta (1342 aa).

This sequence belongs to the RNA polymerase beta chain family. The RNAP catalytic core consists of 2 alpha, 1 beta, 1 beta' and 1 omega subunit. When a sigma factor is associated with the core the holoenzyme is formed, which can initiate transcription.

The catalysed reaction is RNA(n) + a ribonucleoside 5'-triphosphate = RNA(n+1) + diphosphate. In terms of biological role, DNA-dependent RNA polymerase catalyzes the transcription of DNA into RNA using the four ribonucleoside triphosphates as substrates. The polypeptide is DNA-directed RNA polymerase subunit beta (Vibrio vulnificus (strain CMCP6)).